A 288-amino-acid polypeptide reads, in one-letter code: Probable branched-chain-amino-acid aminotransferase (288 aa).

The residue at position 153 (K153) is an N6-(pyridoxal phosphate)lysine.

Belongs to the class-IV pyridoxal-phosphate-dependent aminotransferase family. It depends on pyridoxal 5'-phosphate as a cofactor.

The enzyme catalyses L-leucine + 2-oxoglutarate = 4-methyl-2-oxopentanoate + L-glutamate. It catalyses the reaction L-isoleucine + 2-oxoglutarate = (S)-3-methyl-2-oxopentanoate + L-glutamate. The catalysed reaction is L-valine + 2-oxoglutarate = 3-methyl-2-oxobutanoate + L-glutamate. Its pathway is amino-acid biosynthesis; L-isoleucine biosynthesis; L-isoleucine from 2-oxobutanoate: step 4/4. It functions in the pathway amino-acid biosynthesis; L-leucine biosynthesis; L-leucine from 3-methyl-2-oxobutanoate: step 4/4. The protein operates within amino-acid biosynthesis; L-valine biosynthesis; L-valine from pyruvate: step 4/4. In terms of biological role, acts on leucine, isoleucine and valine. In Rickettsia typhi (strain ATCC VR-144 / Wilmington), this protein is Probable branched-chain-amino-acid aminotransferase (ilvE).